The primary structure comprises 317 residues: Lipoyl synthase (317 aa).

[4Fe-4S] cluster contacts are provided by Cys55, Cys60, Cys66, Cys81, Cys85, Cys88, and Ser292. Positions 67 to 281 (WEDREATFLI…ERYATEIGFA (215 aa)) constitute a Radical SAM core domain.

The protein belongs to the radical SAM superfamily. Lipoyl synthase family. The cofactor is [4Fe-4S] cluster.

The protein resides in the cytoplasm. The catalysed reaction is [[Fe-S] cluster scaffold protein carrying a second [4Fe-4S](2+) cluster] + N(6)-octanoyl-L-lysyl-[protein] + 2 oxidized [2Fe-2S]-[ferredoxin] + 2 S-adenosyl-L-methionine + 4 H(+) = [[Fe-S] cluster scaffold protein] + N(6)-[(R)-dihydrolipoyl]-L-lysyl-[protein] + 4 Fe(3+) + 2 hydrogen sulfide + 2 5'-deoxyadenosine + 2 L-methionine + 2 reduced [2Fe-2S]-[ferredoxin]. It functions in the pathway protein modification; protein lipoylation via endogenous pathway; protein N(6)-(lipoyl)lysine from octanoyl-[acyl-carrier-protein]: step 2/2. In terms of biological role, catalyzes the radical-mediated insertion of two sulfur atoms into the C-6 and C-8 positions of the octanoyl moiety bound to the lipoyl domains of lipoate-dependent enzymes, thereby converting the octanoylated domains into lipoylated derivatives. The protein is Lipoyl synthase of Mycolicibacterium gilvum (strain PYR-GCK) (Mycobacterium gilvum (strain PYR-GCK)).